Reading from the N-terminus, the 109-residue chain is Small ribosomal subunit protein bS18c (109 aa).

The tract at residues 82–109 (GFERSESTPRTNALKPRNKNKQNNQTQF) is disordered.

Belongs to the bacterial ribosomal protein bS18 family. As to quaternary structure, part of the 30S ribosomal subunit.

It is found in the plastid. The protein is Small ribosomal subunit protein bS18c of Cuscuta reflexa (Southern Asian dodder).